We begin with the raw amino-acid sequence, 488 residues long: Beta-amylase (488 aa).

Positions 51, 91, and 99 each coordinate substrate. Glu184 functions as the Proton donor in the catalytic mechanism. The substrate site is built by Lys293, His298, and Thr340. Residue Glu378 is the Proton acceptor of the active site. Substrate is bound by residues Asn379–Ala380 and Arg418.

Belongs to the glycosyl hydrolase 14 family.

It carries out the reaction Hydrolysis of (1-&gt;4)-alpha-D-glucosidic linkages in polysaccharides so as to remove successive maltose units from the non-reducing ends of the chains.. This chain is Beta-amylase (BMY1), found in Zea mays (Maize).